The following is a 990-amino-acid chain: Transposase for transposon Tn3926 (990 aa).

The interval 673 to 698 (GDGTTSSSDGQNFRTGSKAESTGHIN) is disordered. Over residues 674–696 (DGTTSSSDGQNFRTGSKAESTGH) the composition is skewed to polar residues.

The protein belongs to the transposase 7 family.

Functionally, required for transposition of transposon Tn3926. In Escherichia coli, this protein is Transposase for transposon Tn3926 (tnpA).